Consider the following 655-residue polypeptide: p-hydroxybenzoic acid efflux pump subunit AaeB (655 aa).

11 consecutive transmembrane segments (helical) span residues 13-33 (FAVK…HFQL), 38-58 (WAVL…GGEP), 69-89 (LRII…ISMI), 93-113 (LLMI…SSLV), 121-141 (WGLS…EPLL), 152-172 (EIVI…PRSI), 370-390 (LFWL…IAVV), 407-427 (FIYG…VIIP), 431-451 (QSML…GIEV), 459-479 (MGAL…TFHF), and 482-502 (FLDS…VILL).

It belongs to the aromatic acid exporter ArAE (TC 2.A.85) family.

It localises to the cell inner membrane. Functionally, forms an efflux pump with AaeA. Could function as a metabolic relief valve, allowing to eliminate certain compounds when they accumulate to high levels in the cell. This chain is p-hydroxybenzoic acid efflux pump subunit AaeB, found in Salmonella arizonae (strain ATCC BAA-731 / CDC346-86 / RSK2980).